We begin with the raw amino-acid sequence, 218 residues long: uncharacterized protein (218 aa).

2 stretches are compositionally biased toward polar residues: residues 1-21 (MSSQ…SSEF) and 68-102 (LNTS…SSDI). 3 disordered regions span residues 1-39 (MSSQ…RHAS), 63-116 (EKRL…STSG), and 170-205 (GAKR…GTPQ). The segment covering 183–195 (KRQEKQSPLESRH) has biased composition (basic and acidic residues).

This is an uncharacterized protein from Caenorhabditis elegans.